Reading from the N-terminus, the 374-residue chain is Pre-B-cell leukemia transcription factor 4 (374 aa).

One can recognise a PBC domain in the interval 14–209 (PRRLDTSDVL…VMTLRSRLLD (196 aa)). The segment at 21 to 100 (DVLQQIMAIT…EGVCRPEKRG (80 aa)) is PBC-A. Positions 103-209 (GAVARAGTAT…VMTLRSRLLD (107 aa)) are PBC-B. A DNA-binding region (homeobox; TALE-type) is located at residues 210–272 (ARRKRRNFSK…NKRIRYKKNM (63 aa)). Residues 333-374 (QPPPGGGCLQSQAQGSWQGATPQPATASPAGDPGSINSSTSN) form a disordered region. The span at 341–358 (LQSQAQGSWQGATPQPAT) shows a compositional bias: polar residues.

It belongs to the TALE/PBX homeobox family.

It is found in the nucleus. In Homo sapiens (Human), this protein is Pre-B-cell leukemia transcription factor 4 (PBX4).